A 261-amino-acid chain; its full sequence is Thiazole synthase (261 aa).

The Schiff-base intermediate with DXP role is filled by K95. 1-deoxy-D-xylulose 5-phosphate is bound by residues G156, 182–183, and 204–205; these read AG and NT.

The protein belongs to the ThiG family. Homotetramer. Forms heterodimers with either ThiH or ThiS.

The protein resides in the cytoplasm. The enzyme catalyses [ThiS sulfur-carrier protein]-C-terminal-Gly-aminoethanethioate + 2-iminoacetate + 1-deoxy-D-xylulose 5-phosphate = [ThiS sulfur-carrier protein]-C-terminal Gly-Gly + 2-[(2R,5Z)-2-carboxy-4-methylthiazol-5(2H)-ylidene]ethyl phosphate + 2 H2O + H(+). The protein operates within cofactor biosynthesis; thiamine diphosphate biosynthesis. Its function is as follows. Catalyzes the rearrangement of 1-deoxy-D-xylulose 5-phosphate (DXP) to produce the thiazole phosphate moiety of thiamine. Sulfur is provided by the thiocarboxylate moiety of the carrier protein ThiS. In vitro, sulfur can be provided by H(2)S. This is Thiazole synthase from Pectobacterium carotovorum subsp. carotovorum (strain PC1).